A 138-amino-acid chain; its full sequence is Transcription antitermination protein NusB (138 aa).

This sequence belongs to the NusB family.

In terms of biological role, involved in transcription antitermination. Required for transcription of ribosomal RNA (rRNA) genes. Binds specifically to the boxA antiterminator sequence of the ribosomal RNA (rrn) operons. The polypeptide is Transcription antitermination protein NusB (Leptospira interrogans serogroup Icterohaemorrhagiae serovar copenhageni (strain Fiocruz L1-130)).